We begin with the raw amino-acid sequence, 210 residues long: Protein-L-isoaspartate O-methyltransferase (210 aa).

The active site involves S52.

It belongs to the methyltransferase superfamily. L-isoaspartyl/D-aspartyl protein methyltransferase family.

The protein localises to the cytoplasm. The enzyme catalyses [protein]-L-isoaspartate + S-adenosyl-L-methionine = [protein]-L-isoaspartate alpha-methyl ester + S-adenosyl-L-homocysteine. In terms of biological role, catalyzes the methyl esterification of L-isoaspartyl residues in peptides and proteins that result from spontaneous decomposition of normal L-aspartyl and L-asparaginyl residues. It plays a role in the repair and/or degradation of damaged proteins. The protein is Protein-L-isoaspartate O-methyltransferase of Protochlamydia amoebophila (strain UWE25).